Reading from the N-terminus, the 138-residue chain is Superoxide dismutase [Mn] (138 aa).

Mn(2+) is bound by residues glutamine 1, histidine 49, aspartate 133, and histidine 137.

This sequence belongs to the iron/manganese superoxide dismutase family. Mn(2+) is required as a cofactor.

It carries out the reaction 2 superoxide + 2 H(+) = H2O2 + O2. Functionally, destroys superoxide anion radicals which are normally produced within the cells and which are toxic to biological systems. The sequence is that of Superoxide dismutase [Mn] (sodA) from Mycobacteroides chelonae (Mycobacterium chelonae).